The chain runs to 130 residues: Transcription antitermination protein NusB (130 aa).

This sequence belongs to the NusB family.

Involved in transcription antitermination. Required for transcription of ribosomal RNA (rRNA) genes. Binds specifically to the boxA antiterminator sequence of the ribosomal RNA (rrn) operons. This chain is Transcription antitermination protein NusB, found in Bacillus anthracis (strain A0248).